We begin with the raw amino-acid sequence, 446 residues long: Histidine--tRNA ligase (446 aa).

Belongs to the class-II aminoacyl-tRNA synthetase family. As to quaternary structure, homodimer.

It localises to the cytoplasm. It catalyses the reaction tRNA(His) + L-histidine + ATP = L-histidyl-tRNA(His) + AMP + diphosphate + H(+). This Paraburkholderia phytofirmans (strain DSM 17436 / LMG 22146 / PsJN) (Burkholderia phytofirmans) protein is Histidine--tRNA ligase.